Consider the following 389-residue polypeptide: Succinyl-diaminopimelate desuccinylase (389 aa).

Histidine 75 serves as a coordination point for Zn(2+). Residue aspartate 77 is part of the active site. Position 108 (aspartate 108) interacts with Zn(2+). Glutamate 142 functions as the Proton acceptor in the catalytic mechanism. 3 residues coordinate Zn(2+): glutamate 143, glutamate 171, and histidine 357.

This sequence belongs to the peptidase M20A family. DapE subfamily. In terms of assembly, homodimer. It depends on Zn(2+) as a cofactor. Co(2+) serves as cofactor.

The enzyme catalyses N-succinyl-(2S,6S)-2,6-diaminopimelate + H2O = (2S,6S)-2,6-diaminopimelate + succinate. The protein operates within amino-acid biosynthesis; L-lysine biosynthesis via DAP pathway; LL-2,6-diaminopimelate from (S)-tetrahydrodipicolinate (succinylase route): step 3/3. In terms of biological role, catalyzes the hydrolysis of N-succinyl-L,L-diaminopimelic acid (SDAP), forming succinate and LL-2,6-diaminopimelate (DAP), an intermediate involved in the bacterial biosynthesis of lysine and meso-diaminopimelic acid, an essential component of bacterial cell walls. This is Succinyl-diaminopimelate desuccinylase from Paracidovorax citrulli (strain AAC00-1) (Acidovorax citrulli).